The chain runs to 430 residues: NEDD8-activating enzyme E1 catalytic subunit (430 aa).

Gly-52 to Thr-76 is a binding site for ATP. Cys-211 functions as the Glycyl thioester intermediate in the catalytic mechanism.

Belongs to the ubiquitin-activating E1 family. UBA3 subfamily. In terms of assembly, heterodimer of uba-3 and ula-1. Interacts with NEDD8 and ubc-12. In terms of tissue distribution, expressed in intestine, vulva epithelium and head and tail neurons.

Its subcellular location is the nucleus. It localises to the cytoplasm. The catalysed reaction is ATP + [NEDD8 protein] + [E1 NEDD8-activating enzyme]-L-cysteine = AMP + diphosphate + [E1 NEDD8-activating enzyme]-S-[NEDD8 protein]-yl-L-cysteine.. It functions in the pathway protein modification; protein neddylation. Catalytic subunit of the dimeric rfl-1 (uba-3)-ula-1 E1 enzyme. E1 activates NEDD8 by first adenylating its C-terminal glycine residue with ATP, thereafter linking this residue to the side chain of the catalytic cysteine, yielding a NEDD8-uba-3 thioester and free AMP. E1 finally transfers NEDD8 to the catalytic cysteine of ubc-12. Required for cytokinesis and mitotic spindle orientation during early embryogenesis. The protein is NEDD8-activating enzyme E1 catalytic subunit of Caenorhabditis elegans.